The sequence spans 119 residues: Putative membrane protein insertion efficiency factor (119 aa).

The disordered stretch occupies residues 82-119; the sequence is NALRGEKGGESAADVPSGGSVSEPPGPAAETSPNAQGA.

It belongs to the UPF0161 family.

Its subcellular location is the cell membrane. Could be involved in insertion of integral membrane proteins into the membrane. This is Putative membrane protein insertion efficiency factor from Streptomyces griseus subsp. griseus (strain JCM 4626 / CBS 651.72 / NBRC 13350 / KCC S-0626 / ISP 5235).